The sequence spans 266 residues: Glioma pathogenesis-related protein 1 (266 aa).

An N-terminal signal peptide occupies residues 1–21; the sequence is MRVTLATIAWMVSFVSNYSHT. One can recognise an SCP domain in the interval 38–175; the sequence is VRIHNKFRSE…SNGAHFICNY (138 aa). The helical transmembrane segment at 233–255 threads the bilayer; it reads YTSLFLIVNSVILILSVIITILV.

This sequence belongs to the CRISP family. As to expression, according to PubMed:8973356, it is ubiquitously expressed with high levels in lung and kidney and low levels in heart and liver. Highly expressed in cell lines derived from nervous system tumors arising from glia, low or absent in non-glial-derived nervous system tumor cell lines. Also found in fetal kidney. According to PubMed:7607567 it is expressed only in brain tumor glioblastoma multiforme/astrocytoma and not in other nervous system tumors or normal fetal or adult tissues.

Its subcellular location is the membrane. This chain is Glioma pathogenesis-related protein 1 (GLIPR1), found in Homo sapiens (Human).